The primary structure comprises 222 residues: Thiopurine S-methyltransferase (222 aa).

4 residues coordinate S-adenosyl-L-methionine: W10, L45, E66, and R124.

This sequence belongs to the class I-like SAM-binding methyltransferase superfamily. TPMT family.

Its subcellular location is the cytoplasm. The catalysed reaction is S-adenosyl-L-methionine + a thiopurine = S-adenosyl-L-homocysteine + a thiopurine S-methylether.. This Methylococcus capsulatus (strain ATCC 33009 / NCIMB 11132 / Bath) protein is Thiopurine S-methyltransferase.